The primary structure comprises 99 residues: U1-theraphotoxin-Tal1a (99 aa).

The signal sequence occupies residues 1–22; that stretch reads MNTIQVIIFAVVLVLTVTVGQA. Positions 23–57 are excised as a propeptide; sequence DEDSAETSLLRKLKEAEASLFGQHLEESQHSREKR. Intrachain disulfides connect Cys58-Cys73, Cys65-Cys78, and Cys72-Cys93. Ser98 carries the serine amide modification.

Belongs to the neurotoxin 14 (magi-1) family. 08 (Ltx-4) subfamily. As to expression, expressed by the venom gland.

It is found in the secreted. In terms of biological role, insecticidal toxin that shows strong lethal effects on American cockroaches (P.americana) and common mealbeetle (T.molitor). Possibly acts by blocking ion channel currents. Also shows significant analgesic effects in mice models of pain including abdominal writhing induced by acetic acid and formalin-induced paw licking tests. In addition, exerts marked inhibition of proliferation of some human tumor cell lines including C8166, Molt-4, A-549, BIU-87, T24, and Calu-6. This is U1-theraphotoxin-Tal1a from Tliltocatl albopilosus (Curlyhair tarantula).